The chain runs to 249 residues: Small ribosomal subunit protein uS2 (249 aa).

This sequence belongs to the universal ribosomal protein uS2 family.

In Chlorobaculum tepidum (strain ATCC 49652 / DSM 12025 / NBRC 103806 / TLS) (Chlorobium tepidum), this protein is Small ribosomal subunit protein uS2.